Here is a 166-residue protein sequence, read N- to C-terminus: Minor capsid protein VP2 (166 aa).

Residues Pro138–Val166 form a disordered region. The span at Gln149–Val166 shows a compositional bias: pro residues.

It belongs to the vesivirus VP2 protein family. As to quaternary structure, homooligomer. The portal-like structure consists in 12 copies of VP2. Interacts with capsid protein VP1.

The protein resides in the virion. It is found in the host cytoplasm. Its function is as follows. Minor structural protein that forms a portal-like structure at a unique three-fold axis of symmetry, following binding to the host receptor. The channel formed by VP2 may allow the delivery of the viral genome through the host endosomal membrane. The sequence is that of Minor capsid protein VP2 from Homo sapiens (Human).